The primary structure comprises 223 residues: Probable glutathione S-transferase (223 aa).

A GST N-terminal domain is found at 2–81 (AEVKLLGFWY…YIDETFEGPS (80 aa)). Residues Ser-12, Lys-39, Val-53, and 65 to 66 (ES) each bind glutathione. Residues 86-212 (DPYDRALARF…ELLAFFRARF (127 aa)) form the GST C-terminal domain.

It belongs to the GST superfamily. HSP26 family. In terms of tissue distribution, root tip-specific expression.

It carries out the reaction RX + glutathione = an S-substituted glutathione + a halide anion + H(+). In Nicotiana tabacum (Common tobacco), this protein is Probable glutathione S-transferase.